Reading from the N-terminus, the 1035-residue chain is Alpha-mannosidase B (1035 aa).

The signal sequence occupies residues 1–20 (MGKVLILFLFVLLLITFINC). Asparagine 19 and asparagine 30 each carry an N-linked (GlcNAc...) asparagine glycan. The Zn(2+) site is built by histidine 47 and aspartate 49. The N-linked (GlcNAc...) asparagine glycan is linked to asparagine 63. Zn(2+) is bound at residue aspartate 161. Catalysis depends on aspartate 161, which acts as the Nucleophile. Asparagine 245, asparagine 250, asparagine 270, asparagine 309, asparagine 327, and asparagine 438 each carry an N-linked (GlcNAc...) asparagine glycan. A Zn(2+)-binding site is contributed by histidine 446. N-linked (GlcNAc...) asparagine glycans are attached at residues asparagine 487, asparagine 497, asparagine 503, asparagine 710, asparagine 719, asparagine 735, asparagine 792, asparagine 852, asparagine 863, asparagine 880, asparagine 962, and asparagine 993.

It belongs to the glycosyl hydrolase 38 family. Zn(2+) serves as cofactor.

The protein localises to the secreted. The catalysed reaction is Hydrolysis of terminal, non-reducing alpha-D-mannose residues in alpha-D-mannosides.. In Dictyostelium discoideum (Social amoeba), this protein is Alpha-mannosidase B (manB).